Consider the following 358-residue polypeptide: Chondroadherin (358 aa).

The first 20 residues, 1-20, serve as a signal peptide directing secretion; sequence MARVLLLSLVFLAILLPALA. The 30-residue stretch at 21–50 folds into the LRRNT domain; sequence ACPQNCHCHGDLQHVICDKVGLQKIPKVSE. Cys-22 and Cys-37 are joined by a disulfide. LRR repeat units follow at residues 51–72, 75–96, 99–120, 123–144, 147–168, 171–192, 195–216, 219–240, 244–265, and 268–289; these read TTKL…SFRT, NLVS…AFRG, QLIY…AFDD, ELTY…LLSP, NLFI…AFQG, DLRW…SLDD, NLAK…ALSK, VVEE…AFQS, YLET…AFAG, and TLKH…FPFD. An O-linked (GalNAc...) serine glycan is attached at Ser-143. The region spanning 299 to 347 is the LRRCT domain; that stretch reads NPWKCTCQLRGLRRWLEAKTSRPDATCSSPAKFKGQRIRDTDALRSCKS. Disulfide bonds link Cys-303–Cys-345 and Cys-305–Cys-325. Positions 321-358 are disordered; it reads PDATCSSPAKFKGQRIRDTDALRSCKSPTKRSKKAGRH. The segment covering 348–358 has biased composition (basic residues); that stretch reads PTKRSKKAGRH.

This sequence belongs to the small leucine-rich proteoglycan (SLRP) family. SLRP class IV subfamily. Mostly monomeric. In terms of tissue distribution, present in femoral head and rib cartilage, as well as in tendon. Detected in bone marrow.

It localises to the secreted. It is found in the extracellular space. Its subcellular location is the extracellular matrix. Functionally, promotes attachment of chondrocytes, fibroblasts, and osteoblasts. This binding is mediated (at least for chondrocytes and fibroblasts) by the integrin alpha(2)beta(1). May play an important role in the regulation of chondrocyte growth and proliferation. The protein is Chondroadherin (Chad) of Rattus norvegicus (Rat).